The primary structure comprises 100 residues: Large ribosomal subunit protein uL23 (100 aa).

The protein belongs to the universal ribosomal protein uL23 family. As to quaternary structure, part of the 50S ribosomal subunit. Contacts protein L29, and trigger factor when it is bound to the ribosome.

One of the early assembly proteins it binds 23S rRNA. One of the proteins that surrounds the polypeptide exit tunnel on the outside of the ribosome. Forms the main docking site for trigger factor binding to the ribosome. This is Large ribosomal subunit protein uL23 from Photorhabdus laumondii subsp. laumondii (strain DSM 15139 / CIP 105565 / TT01) (Photorhabdus luminescens subsp. laumondii).